A 435-amino-acid chain; its full sequence is Serine--tRNA ligase (435 aa).

Residue 242–244 (TAE) coordinates L-serine. An ATP-binding site is contributed by 273-275 (RSE). Position 296 (Glu296) interacts with L-serine. An ATP-binding site is contributed by 360-363 (EISS). Residue Ser396 coordinates L-serine.

It belongs to the class-II aminoacyl-tRNA synthetase family. Type-1 seryl-tRNA synthetase subfamily. Homodimer. The tRNA molecule binds across the dimer.

The protein resides in the cytoplasm. It catalyses the reaction tRNA(Ser) + L-serine + ATP = L-seryl-tRNA(Ser) + AMP + diphosphate + H(+). The enzyme catalyses tRNA(Sec) + L-serine + ATP = L-seryl-tRNA(Sec) + AMP + diphosphate + H(+). It functions in the pathway aminoacyl-tRNA biosynthesis; selenocysteinyl-tRNA(Sec) biosynthesis; L-seryl-tRNA(Sec) from L-serine and tRNA(Sec): step 1/1. Functionally, catalyzes the attachment of serine to tRNA(Ser). Is also able to aminoacylate tRNA(Sec) with serine, to form the misacylated tRNA L-seryl-tRNA(Sec), which will be further converted into selenocysteinyl-tRNA(Sec). In Aliivibrio salmonicida (strain LFI1238) (Vibrio salmonicida (strain LFI1238)), this protein is Serine--tRNA ligase.